Consider the following 1582-residue polypeptide: Adhesion G protein-coupled receptor B1 (1582 aa).

The N-terminal stretch at 1–33 (MRGQAAAPGPIWILAPLLLLLLLLGRWARAASG) is a signal peptide. The Extracellular portion of the chain corresponds to 34–948 (ADIGPGTEQC…ATMDKVTVPS (915 aa)). N-linked (GlcNAc...) asparagine glycosylation is present at Asn-64. The 55-residue stretch at 261–315 (AGGWKLWSLWGECTRDCGGGLQTRTRTCLPTLGVEGGGCEGVLEEGRLCNRKACG) folds into the TSP type-1 1 domain. Intrachain disulfides connect Cys-273/Cys-309, Cys-277/Cys-314, and Cys-288/Cys-299. A disordered region spans residues 313–335 (ACGPTGRSSSRSQSLRSTDARRR). A compositionally biased stretch (low complexity) spans 319 to 329 (RSSSRSQSLRS). TSP type-1 domains lie at 354–407 (DPAA…AVCP), 409–462 (HGAW…ALCP), 467–520 (DGNW…QQCP), and 522–575 (DGKW…QRCP). 14 cysteine pairs are disulfide-bonded: Cys-366/Cys-400, Cys-370/Cys-406, Cys-381/Cys-390, Cys-421/Cys-456, Cys-425/Cys-461, Cys-436/Cys-446, Cys-479/Cys-514, Cys-483/Cys-519, Cys-494/Cys-504, Cys-534/Cys-569, Cys-538/Cys-574, Cys-549/Cys-559, Cys-581/Cys-616, and Cys-604/Cys-634. Residue Asn-401 is glycosylated (N-linked (GlcNAc...) asparagine). Asn-607 is a glycosylation site (N-linked (GlcNAc...) asparagine). Thr-609 is modified (phosphothreonine). N-linked (GlcNAc...) asparagine glycosylation is found at Asn-692, Asn-844, Asn-877, and Asn-881. Residues 760–939 (RDAYQVTDNL…AILAQLSADA (180 aa)) enclose the GAIN-B domain. Intrachain disulfides connect Cys-884-Cys-921 and Cys-909-Cys-923. A GPS region spans residues 884 to 939 (CILWDETDGPSSSAPPQLGPWSWRGCRTVPLDALRTRCLCDRLSTFAILAQLSADA). The N-terminal stalk following vasculostatin-120 cleavage which is not required for signaling activity stretch occupies residues 927–943 (STFAILAQLSADATMDK). A helical membrane pass occupies residues 949-969 (VTLIVGCGVSSLTLLMLVIIY). Residues 970-980 (VSVWRYIRSER) are Cytoplasmic-facing. A helical transmembrane segment spans residues 981–1001 (SVILINFCLSIISSNALILIG). Residues 1002 to 1008 (QTQTRNK) lie on the Extracellular side of the membrane. Residues 1009–1029 (VVCTLVAAFLHFFFLSSFCWV) traverse the membrane as a helical segment. The Cytoplasmic portion of the chain corresponds to 1030-1052 (LTEAWQSYMAVTGRLRSRLVRKR). A helical membrane pass occupies residues 1053–1073 (FLCLGWGLPALVVAISVGFTK). The Extracellular segment spans residues 1074–1093 (AKGYSTMNYCWLSLEGGLLY). Residues 1094-1114 (AFVGPAAAVVLVNMVIGILVF) traverse the membrane as a helical segment. The Cytoplasmic portion of the chain corresponds to 1115-1136 (NKLVSKDGITDKKLKERAGASL). The chain crosses the membrane as a helical span at residues 1137-1157 (WSSCVVLPLLALTWMSAVLAV). The Extracellular portion of the chain corresponds to 1158–1166 (TDRRSALFQ). Residues 1167 to 1187 (ILFAVFDSLEGFVIVMVHCIL) traverse the membrane as a helical segment. Topologically, residues 1188-1582 (RREVQDAVKC…QDIIDLQTEV (395 aa)) are cytoplasmic. The involved in interaction with MAGI1 stretch occupies residues 1363-1582 (YSINIDQMPQ…QDIIDLQTEV (220 aa)). The interval 1382-1549 (PDASFPTRSP…AWVKKELEPL (168 aa)) is disordered. Positions 1389–1435 (RSPPAREPPGGAPPEVPPVQPPPPPPPPPPPPQQPIPPPPTLEPAPP) are enriched in pro residues. The segment covering 1441 to 1455 (GEPAAHPGPSSGAGA) has biased composition (low complexity). The residue at position 1467 (Ser-1467) is a Phosphoserine. 2 stretches are compositionally biased toward basic and acidic residues: residues 1468–1484 (LERR…EKIM) and 1491–1520 (QDMF…KPEK). The interval 1579–1582 (QTEV) is indispensable for interaction with MAGI1.

The protein belongs to the G-protein coupled receptor 2 family. LN-TM7 subfamily. In terms of assembly, interacts with ELMO1 and DOCK1. When bound to ELMO1 and DOCK1, acts as a module to promote apoptotic cell engulfment. Interacts with MDM2; the interaction results in inhibition of MDM2-mediated ubiquitination and degradation of DLG4/PSD95. Interacts with PARD3 and TIAM1; the interaction is required for correct dendritic localization of PARD3 and TIAM1 and for dendritic spine formation. Interacts with MAGI1, MAGI3 and BAIAP2. Interacts with PHYHIP. Interacts with DLG4 (via PDZ domain). Vasculostatin-120: Interacts with CD36. Vasculostatin-120: Interacts with ARRB2. Interacts with BAIAP3; this interaction is direct. Post-translationally, proteolytically cleaved to produce vasculostatin-40 and vasculostatin-120. Vasculostatin-40 is the major form and is produced through proteolytic cleavage by MMP14 between residues 321 and 329 with cleavage likely to be between Ser-326 and Leu-327. In terms of processing, ubiquitinated. In brain, widespread expression in all neuropil-rich zones including spinal cord gray matter, cerebellar molecular layer, cerebral cortex, thalamic nuclei and basal ganglia with no expression in white matter (at protein level). In the cerebellar molecular layer, highly expressed in interneuron processes whereas Purkinje cells and their dendrites show weaker expression (at protein level). In the olfactory bulb, highly expressed in glomeruli (at protein level). In the retina, highly concentrated in the outer and inner plexiform layers (at protein level). Expressed in brain. Enriched in hippocampus and cortex. Also detected in other tissues including bone marrow and spleen.

It localises to the cell membrane. The protein resides in the cell projection. It is found in the phagocytic cup. Its subcellular location is the cell junction. The protein localises to the focal adhesion. It localises to the dendritic spine. The protein resides in the postsynaptic density. It is found in the secreted. Functionally, phosphatidylserine receptor which enhances the engulfment of apoptotic cells. Also mediates the binding and engulfment of Gram-negative bacteria. Stimulates production of reactive oxygen species by macrophages in response to Gram-negative bacteria, resulting in enhanced microbicidal macrophage activity. In the gastric mucosa, required for recognition and engulfment of apoptotic gastric epithelial cells. Promotes myoblast fusion. Activates the Rho pathway in a G-protein-dependent manner. Inhibits MDM2-mediated ubiquitination and degradation of DLG4/PSD95, promoting DLG4 stability and regulating synaptic plasticity. Required for the formation of dendritic spines by ensuring the correct localization of PARD3 and TIAM1. Potent inhibitor of angiogenesis in brain and may play a significant role as a mediator of the p53/TP53 signal in suppression of glioblastoma. Its function is as follows. Inhibits angiogenesis in a CD36-dependent manner. Inhibits angiogenesis. This is Adhesion G protein-coupled receptor B1 from Mus musculus (Mouse).